The chain runs to 374 residues: MFLTHLSLKNYRNYESETIEFANNVNIILGENAQGKTNMMEAIYVLAMAKSHRTTNDKDLIRWDEDYAKIEGKAMKKNGALSLELIISKKGKKAKCNHIEQQRLSQYVGHLNIVMFAPEDLNLVKGSPQVRRRFVDMEIGQVSPVYIHDLSQYQKLLQQRNHYLKMLQTREQQDETVLDILTEQLIPLAAKITLKRYEFLLLLQKWAAPIHHEISRGLETLQIQYRPSVDVSEKIELSRIIEAYSEKFATIKEREIQRGMTLAGPHRDDIAFSVNGKDVQIFGSQGQQRTTALSIKLAEIELIFSEIGDYPILLLDDVLSELDDFRQTHLLDTIRKKVQTFVTTTSIEGIEHDIIKEAAIYKVHSGHITAPLCD.

30–37 (GENAQGKT) serves as a coordination point for ATP.

This sequence belongs to the RecF family.

The protein localises to the cytoplasm. Its function is as follows. The RecF protein is involved in DNA metabolism; it is required for DNA replication and normal SOS inducibility. RecF binds preferentially to single-stranded, linear DNA. It also seems to bind ATP. The protein is DNA replication and repair protein RecF of Geobacillus sp. (strain WCH70).